We begin with the raw amino-acid sequence, 132 residues long: HLA class I histocompatibility antigen protein P5 (132 aa).

In terms of tissue distribution, expressed in lymphoid tissues; Detected in spleen as well as in B-cell lines, NK cell lines and activated lymphocytes.

The chain is HLA class I histocompatibility antigen protein P5 (HCP5) from Homo sapiens (Human).